A 303-amino-acid chain; its full sequence is Glycine--tRNA ligase alpha subunit (303 aa).

Belongs to the class-II aminoacyl-tRNA synthetase family. As to quaternary structure, tetramer of two alpha and two beta subunits.

It localises to the cytoplasm. It catalyses the reaction tRNA(Gly) + glycine + ATP = glycyl-tRNA(Gly) + AMP + diphosphate. This Stenotrophomonas maltophilia (strain K279a) protein is Glycine--tRNA ligase alpha subunit.